A 265-amino-acid chain; its full sequence is Type 1 encapsulin shell protein (265 aa).

FMN contacts are provided by residues 79–81 (RAT), W87, and 90–94 (DNLER). The pore-forming loop stretch occupies residues 184 to 189 (EAGHYP). E235 provides a ligand contact to FMN.

It belongs to the encapsulin family. Family 1 subfamily. As to quaternary structure, homomultimeric. This encapsulin nanocompartment is formed by 60 subunits; monomers form 12 pentamers which assemble to form shells. There are 12 pores where the pentamers meet as well as 3-fold axis channels and dimer channels; none are larger than 3-4 Angstroms in diameter. The N-terminus of the protein is inside the shell, the C-terminus is outside. Probably 3, 4 or 5 Flp cargo decamers bind inside the encapulin nanocompartment. Requires FMN as cofactor.

Its subcellular location is the encapsulin nanocompartment. Its activity is regulated as follows. Proteolysis activated by calcium and cobalt. Shell component of a type 1 encapsulin nanocompartment. Assembles into proteinaceous shells 23-24 nm in diameter with 2-2.5 nm thick walls. Cargo protein Flp (ferritin-like protein, probably stores iron) is targeted to the interior via its C-terminal extension; empty intact shells can be isolated in the absence of cargo protein. Fe(2+) may be able to pass though the 5-fold and dimer channels in the protein shell. In terms of biological role, protease that exhibits activity toward chymotrypsin and trypsin substrates. Probably does not have antibacterial activity. This is Type 1 encapsulin shell protein from Thermotoga maritima (strain ATCC 43589 / DSM 3109 / JCM 10099 / NBRC 100826 / MSB8).